The primary structure comprises 408 residues: Peptidase T (408 aa).

Histidine 78 provides a ligand contact to Zn(2+). Aspartate 80 is a catalytic residue. Aspartate 141 provides a ligand contact to Zn(2+). Glutamate 175 serves as the catalytic Proton acceptor. Zn(2+) contacts are provided by glutamate 176, aspartate 198, and histidine 380.

It belongs to the peptidase M20B family. Zn(2+) serves as cofactor.

Its subcellular location is the cytoplasm. It carries out the reaction Release of the N-terminal residue from a tripeptide.. Functionally, cleaves the N-terminal amino acid of tripeptides. The chain is Peptidase T from Clostridium botulinum (strain 657 / Type Ba4).